Reading from the N-terminus, the 102-residue chain is Small ribosomal subunit protein eS24 (102 aa).

It belongs to the eukaryotic ribosomal protein eS24 family.

The sequence is that of Small ribosomal subunit protein eS24 from Methanococcus maripaludis (strain DSM 14266 / JCM 13030 / NBRC 101832 / S2 / LL).